A 431-amino-acid chain; its full sequence is Tyrosine--tRNA ligase (431 aa).

Tyr34 contributes to the L-tyrosine binding site. Residues 39–48 (PTADSLHIGH) carry the 'HIGH' region motif. L-tyrosine contacts are provided by Tyr171 and Gln175. The 'KMSKS' region signature appears at 231-235 (KFGKT). Lys234 lines the ATP pocket. Positions 353–422 (INVVEALVKT…GKYTILRRGK (70 aa)) constitute an S4 RNA-binding domain.

It belongs to the class-I aminoacyl-tRNA synthetase family. TyrS type 1 subfamily. As to quaternary structure, homodimer.

It localises to the cytoplasm. It catalyses the reaction tRNA(Tyr) + L-tyrosine + ATP = L-tyrosyl-tRNA(Tyr) + AMP + diphosphate + H(+). Catalyzes the attachment of tyrosine to tRNA(Tyr) in a two-step reaction: tyrosine is first activated by ATP to form Tyr-AMP and then transferred to the acceptor end of tRNA(Tyr). In Neisseria meningitidis serogroup C / serotype 2a (strain ATCC 700532 / DSM 15464 / FAM18), this protein is Tyrosine--tRNA ligase.